The sequence spans 323 residues: Melanocortin receptor 3 (323 aa).

Residues 1 to 37 (MNSSCCPSSSYPTLPNLSQHPAAPSASNRSGSGFCEQ) are Extracellular-facing. 3 N-linked (GlcNAc...) asparagine glycosylation sites follow: Asn2, Asn16, and Asn28. The chain crosses the membrane as a helical span at residues 38 to 63 (VFIKPEVFLALGIVSLMENILVILAV). Over 64–75 (VRNGNLHSPMYF) the chain is Cytoplasmic. A helical transmembrane segment spans residues 76-100 (FLCSLAAADMLVSLSNSLETIMIVV). Residues 101–118 (INSDSLTLEDQFIQHMDN) are Extracellular-facing. The helical transmembrane segment at 119–140 (IFDSMICISLVASICNLLAIAV) threads the bilayer. Residues 141–160 (DRYVTIFYALRYHSIMTVRK) lie on the Cytoplasmic side of the membrane. A helical transmembrane segment spans residues 161 to 181 (ALSLIVAIWVCCGICGVMFIV). The Extracellular portion of the chain corresponds to 182–186 (YSESK). The chain crosses the membrane as a helical span at residues 187-210 (MVIVCLITMFFAMVLLMGTLYIHM). Residues 211–245 (FLFARLHVQRIAALPPADGVAPQQHSCMKGAVTIT) are Cytoplasmic-facing. The helical transmembrane segment at 246-268 (ILLGVFIFCWAPFFLHLVLIITC) threads the bilayer. The Extracellular segment spans residues 269–277 (PTNPYCICY). Residues 278–301 (TAHFNTYLVLIMCNSVIDPLIYAF) form a helical membrane-spanning segment. The Cytoplasmic segment spans residues 302–323 (RSLELRNTFKEILCGCNGMNVG). A lipid anchor (S-palmitoyl cysteine) is attached at Cys315.

This sequence belongs to the G-protein coupled receptor 1 family. In terms of tissue distribution, brain.

It localises to the cell membrane. In terms of biological role, receptor for MSH (alpha, beta and gamma) and ACTH. This receptor is mediated by G proteins which activate adenylate cyclase. Required for expression of anticipatory patterns of activity and wakefulness during periods of limited nutrient availability and for the normal regulation of circadian clock activity in the brain. In Rattus norvegicus (Rat), this protein is Melanocortin receptor 3 (Mc3r).